A 282-amino-acid polypeptide reads, in one-letter code: Aminoglycoside 6-adenylyltransferase (282 aa).

The catalysed reaction is streptomycin + ATP = 6-O-adenylylstreptomycin + diphosphate. Required for streptomycin resistance. Adenylates streptomycin on the O-6 residue. In Staphylococcus aureus, this protein is Aminoglycoside 6-adenylyltransferase.